Here is a 241-residue protein sequence, read N- to C-terminus: MPDAQDKLTLLKNRLGIAWRDEGLLTRALTHSSFTYENRQNGLENNQRLEFLGDAVLELAVSDYLYRSKPEMDEGDLTKLRASVVCEPSLARVARELELGTCLYMGKGEERSGGRDRPSILADAFEALLGAVYLDQGLEKAAGLAIKYLAPLIGDVLEGRLERDYKTELQELVQQRGGEQVQYVILKEEGPDHHKSFTAGVLYRGVLVGQGTGRSKKEAEQQAAKKALMKSDLGSACNHKK.

An RNase III domain is found at 8-137 (LTLLKNRLGI…LLGAVYLDQG (130 aa)). Glu50 is a Mg(2+) binding site. Asp54 is a catalytic residue. 2 residues coordinate Mg(2+): Asp123 and Glu126. Glu126 is a catalytic residue. A DRBM domain is found at 164 to 233 (DYKTELQELV…AKKALMKSDL (70 aa)). The disordered stretch occupies residues 214-241 (RSKKEAEQQAAKKALMKSDLGSACNHKK).

Belongs to the ribonuclease III family. In terms of assembly, homodimer. The cofactor is Mg(2+).

It is found in the cytoplasm. It carries out the reaction Endonucleolytic cleavage to 5'-phosphomonoester.. In terms of biological role, digests double-stranded RNA. Involved in the processing of primary rRNA transcript to yield the immediate precursors to the large and small rRNAs (23S and 16S). Processes some mRNAs, and tRNAs when they are encoded in the rRNA operon. Processes pre-crRNA and tracrRNA of type II CRISPR loci if present in the organism. The protein is Ribonuclease 3 of Pelotomaculum thermopropionicum (strain DSM 13744 / JCM 10971 / SI).